A 290-amino-acid chain; its full sequence is UPF0750 membrane protein YdeO (290 aa).

The next 5 membrane-spanning stretches (helical) occupy residues 18–38 (IIMV…VLIP), 56–76 (LFNL…VWLG), 83–103 (SFAL…SFFH), 112–132 (DTLL…GLAL), and 165–185 (LFVF…LSVI).

It belongs to the UPF0750 family.

It is found in the cell membrane. The polypeptide is UPF0750 membrane protein YdeO (ydeO) (Bacillus subtilis (strain 168)).